The primary structure comprises 182 residues: CDP-diacylglycerol--glycerol-3-phosphate 3-phosphatidyltransferase (182 aa).

Over 1-12 the chain is Cytoplasmic; the sequence is MQLNIPTWLTLF. The chain crosses the membrane as a helical span at residues 13-37; it reads RVVLIPFFVLAFYLPFVWAPMVCAI. The Periplasmic segment spans residues 38-60; that stretch reads IFVFAAATDWFDGFLARRWKQTT. The chain crosses the membrane as a helical span at residues 61–81; the sequence is RFGAFLDPVADKVMVAVALVL. Residues 82–86 are Cytoplasmic-facing; that stretch reads VAEHY. A helical transmembrane segment spans residues 87–107; the sequence is HSWWITLPAATMIAREIIISS. The Periplasmic segment spans residues 108-145; it reads LREWMAEIGKRSSVAVSWVGKVKTMAQMGSLVGLLWRP. A helical transmembrane segment spans residues 146–168; the sequence is DHNVELASFVLLYIAAVLTFWSM. The Cytoplasmic portion of the chain corresponds to 169–181; that stretch reads FQYLNAAWSDLLE.

The protein belongs to the CDP-alcohol phosphatidyltransferase class-I family.

It localises to the cell inner membrane. The enzyme catalyses a CDP-1,2-diacyl-sn-glycerol + sn-glycerol 3-phosphate = a 1,2-diacyl-sn-glycero-3-phospho-(1'-sn-glycero-3'-phosphate) + CMP + H(+). It participates in phospholipid metabolism; phosphatidylglycerol biosynthesis; phosphatidylglycerol from CDP-diacylglycerol: step 1/2. Its function is as follows. Catalyzes the conversion of cytidine diphosphate diacylglycerol (CDP-DG) and glycerol 3-phosphate into phosphatidylglycerol. Essential for the synthesis of anionic phospholipids, thereby playing a role in balancing the ratio of zwitterionic and anionic phospholipids, which is thought to be important for normal membrane function. This is CDP-diacylglycerol--glycerol-3-phosphate 3-phosphatidyltransferase from Yersinia pestis bv. Antiqua (strain Antiqua).